We begin with the raw amino-acid sequence, 784 residues long: Endonuclease MutS2 (784 aa).

335–342 (GPNTGGKT) lines the ATP pocket. In terms of domain architecture, Smr spans 709–784 (LDLRGERYED…GTGVTIVELK (76 aa)).

The protein belongs to the DNA mismatch repair MutS family. MutS2 subfamily. Homodimer. Binds to stalled ribosomes, contacting rRNA.

Endonuclease that is involved in the suppression of homologous recombination and thus may have a key role in the control of bacterial genetic diversity. Functionally, acts as a ribosome collision sensor, splitting the ribosome into its 2 subunits. Detects stalled/collided 70S ribosomes which it binds and splits by an ATP-hydrolysis driven conformational change. Acts upstream of the ribosome quality control system (RQC), a ribosome-associated complex that mediates the extraction of incompletely synthesized nascent chains from stalled ribosomes and their subsequent degradation. Probably generates substrates for RQC. In Geobacillus sp. (strain WCH70), this protein is Endonuclease MutS2.